Consider the following 778-residue polypeptide: Receptor like protein 28 (778 aa).

An N-terminal signal peptide occupies residues methionine 1–serine 24. The Extracellular portion of the chain corresponds to serine 25–lysine 739. Residues asparagine 60, asparagine 72, asparagine 93, asparagine 106, asparagine 111, asparagine 147, asparagine 170, and asparagine 173 are each glycosylated (N-linked (GlcNAc...) asparagine). LRR repeat units follow at residues phenylalanine 99–asparagine 123, asparagine 125–asparagine 147, leucine 148–leucine 171, threonine 172–methionine 195, and phenylalanine 197–lysine 219. One copy of the LRR 6; degenerate repeat lies at leucine 220–lysine 240. LRR repeat units follow at residues leucine 241–serine 265, leucine 266–proline 291, threonine 293–threonine 313, leucine 314–leucine 338, arginine 340–asparagine 363, and serine 364–isoleucine 387. Asparagine 253 is a glycosylation site (N-linked (GlcNAc...) asparagine). Asparagine 348 and asparagine 363 each carry an N-linked (GlcNAc...) asparagine glycan. The stretch at lysine 388 to asparagine 407 is one LRR 13; degenerate repeat. N-linked (GlcNAc...) asparagine glycans are attached at residues asparagine 396, asparagine 407, asparagine 420, asparagine 431, and asparagine 476. LRR repeat units lie at residues arginine 408–leucine 429, serine 430–glycine 453, serine 455–cysteine 477, serine 479–alanine 500, leucine 501–proline 525, phenylalanine 528–asparagine 552, leucine 601–leucine 625, lysine 626–alanine 649, threonine 650–leucine 673, and tyrosine 678–glutamate 700. N-linked (GlcNAc...) asparagine glycans are attached at residues asparagine 632 and asparagine 648. Residue asparagine 680 is glycosylated (N-linked (GlcNAc...) asparagine). The helical transmembrane segment at alanine 740–alanine 760 threads the bilayer. At serine 761–phenylalanine 778 the chain is on the cytoplasmic side.

The protein belongs to the RLP family.

The protein resides in the cell membrane. The polypeptide is Receptor like protein 28 (Arabidopsis thaliana (Mouse-ear cress)).